A 190-amino-acid polypeptide reads, in one-letter code: Xanthine phosphoribosyltransferase (190 aa).

Xanthine contacts are provided by Leu20 and Asn27. 127-131 (AYGNA) contacts 5-phospho-alpha-D-ribose 1-diphosphate. Lys155 serves as a coordination point for xanthine.

Belongs to the purine/pyrimidine phosphoribosyltransferase family. Xpt subfamily. Homodimer.

It localises to the cytoplasm. The enzyme catalyses XMP + diphosphate = xanthine + 5-phospho-alpha-D-ribose 1-diphosphate. Its pathway is purine metabolism; XMP biosynthesis via salvage pathway; XMP from xanthine: step 1/1. Functionally, converts the preformed base xanthine, a product of nucleic acid breakdown, to xanthosine 5'-monophosphate (XMP), so it can be reused for RNA or DNA synthesis. The polypeptide is Xanthine phosphoribosyltransferase (Bacteroides thetaiotaomicron (strain ATCC 29148 / DSM 2079 / JCM 5827 / CCUG 10774 / NCTC 10582 / VPI-5482 / E50)).